The sequence spans 164 residues: PTS system sorbose-specific EIIB component (164 aa).

Residues 1 to 164 (MQITLARIDD…DKINETAFCE (164 aa)) enclose the PTS EIIB type-4 domain. Residue histidine 14 is the Pros-phosphohistidine intermediate of the active site. Histidine 14 is subject to Phosphohistidine; by EIIA.

In terms of assembly, dimer of dimers.

It localises to the cytoplasm. The enzyme catalyses keto-L-sorbose(out) + N(pros)-phospho-L-histidyl-[protein] = L-sorbose 1-phosphate(in) + L-histidyl-[protein]. The phosphoenolpyruvate-dependent sugar phosphotransferase system (PTS), a major carbohydrate active transport system, catalyzes the phosphorylation of incoming sugar substrates concomitant with their translocation across the cell membrane. The enzyme II SorABFM PTS system is involved in L-sorbose transport. The sequence is that of PTS system sorbose-specific EIIB component from Klebsiella pneumoniae.